Reading from the N-terminus, the 86-residue chain is Cell division topological specificity factor (86 aa).

It belongs to the MinE family.

In terms of biological role, prevents the cell division inhibition by proteins MinC and MinD at internal division sites while permitting inhibition at polar sites. This ensures cell division at the proper site by restricting the formation of a division septum at the midpoint of the long axis of the cell. The polypeptide is Cell division topological specificity factor (Alteromonas mediterranea (strain DSM 17117 / CIP 110805 / LMG 28347 / Deep ecotype)).